We begin with the raw amino-acid sequence, 198 residues long: Cyclin-dependent kinase inhibitor 1B (198 aa).

Residues M1–P11 are compositionally biased toward polar residues. The disordered stretch occupies residues M1 to E22. S10 is modified (phosphoserine; by UHMK1). The tract at residues D51–P91 is interaction with CDK2. Phosphotyrosine; by SRC is present on Y74. Residues F87–T198 form a disordered region. Y88 carries the phosphotyrosine; by ABL, LYN and SRC modification. Y89 is modified (phosphotyrosine). A compositionally biased stretch (polar residues) spans Q104–R113. Residues E126 to T137 show a composition bias toward basic and acidic residues. Positions K153 to R169 match the Nuclear localization signal motif. At T157 the chain carries Phosphothreonine; by CaMK1, PKB/AKT1 and PIM1. T170 carries the phosphothreonine modification. The span at S175 to Q186 shows a compositional bias: polar residues. T187 is modified (phosphothreonine; by PKB/AKT1, CDK1 and CDK2). The residue at position 198 (T198) is a Phosphothreonine; by CaMK1, PKB/AKT1, RPS6KA1, RPS6KA3 and PIM1.

The protein belongs to the CDI family. As to quaternary structure, forms a ternary complex composed of CCNE1, CDK2 and CDKN1B. Interacts directly with CCNE1; the interaction is inhibited by CDK2-dependent phosphorylation on Thr-187. Interacts with COPS5, subunit of the COP9 signalosome complex; the interaction leads to CDKN1B degradation. Interacts with NUP50; the interaction leads to nuclear import and degradation of phosphorylated CDKN1B. Interacts with CCND1 and SNX6. Interacts (Thr-198-phosphorylated form) with 14-3-3 proteins, binds strongly YWHAQ, weakly YWHAE and YWHAH, but not YWHAB nor YWHAZ; the interaction with YWHAQ results in translocation to the cytoplasm. Interacts with AKT1 and LYN; the interactions lead to cytoplasmic mislocation, phosphorylation of CDKN1B and inhibition of cell cycle arrest. Forms a ternary complex with CCNA2 and CDK2; CDKN1B inhibits the kinase activity of CDK2 through conformational rearrangements. Interacts (unphosphorylated form) with CDK2. Forms a complex with CDK2 and SPDYA, but does not directly interact with SPDYA. Forms a ternary complex composed of cyclin D, CDK4 and CDKN1B. Interacts (phosphorylated on Tyr-88 and Tyr-89) with CDK4; the interaction is required for cyclin D and CDK4 complex assembly, induces nuclear translocation and activates the CDK4 kinase activity. Interacts with GRB2. Interacts with PIM1. Identified in a complex with SKP1, SKP2 and CKS1B. Interacts with UHMK1; the interaction leads to cytoplasmic mislocation, phosphorylation of CDKN1B and inhibition of cell cycle arrest. Also interacts with CDK1. Dephosphorylated on Thr-187 by PPM1H, leading to CDKN1B stability. Phosphorylated; phosphorylation occurs on serine, threonine and tyrosine residues. Phosphorylation on Ser-10 is the major site of phosphorylation in resting cells, takes place at the G(0)-G(1) phase and leads to protein stability. Phosphorylation on other sites is greatly enhanced by mitogens, growth factors, cMYC and in certain cancer cell lines. The phosphorylated form found in the cytoplasm is inactivate. Phosphorylation on Thr-198 is required for interaction with 14-3-3 proteins. Phosphorylation on Thr-187, by CDK1 and CDK2 leads to protein ubiquitination and proteasomal degradation. Tyrosine phosphorylation promotes this process. Phosphorylation by PKB/AKT1 can be suppressed by LY294002, an inhibitor of the catalytic subunit of PI3K. Phosphorylation on Tyr-88 and Tyr-89 has no effect on binding CDK2, but is required for binding CDK4. Dephosphorylated on tyrosine residues by G-CSF. Dephosphorylated on Thr-187 by PPM1H, leading to CDKN1B stability. In terms of processing, ubiquitinated; in the cytoplasm by the KPC complex (composed of RNF123/KPC1 and UBAC1/KPC2) and, in the nucleus, by SCF(SKP2). The latter requires prior phosphorylation on Thr-187. Ubiquitinated; by a TRIM21-containing SCF(SKP2)-like complex; leads to its degradation. Post-translationally, subject to degradation in the lysosome. Interaction with SNX6 promotes lysosomal degradation.

The protein resides in the nucleus. The protein localises to the cytoplasm. Its subcellular location is the endosome. In terms of biological role, important regulator of cell cycle progression. Inhibits the kinase activity of CDK2 bound to cyclin A, but has little inhibitory activity on CDK2 bound to SPDYA. Involved in G1 arrest. Potent inhibitor of cyclin E- and cyclin A-CDK2 complexes. Forms a complex with cyclin type D-CDK4 complexes and is involved in the assembly, stability, and modulation of CCND1-CDK4 complex activation. Acts either as an inhibitor or an activator of cyclin type D-CDK4 complexes depending on its phosphorylation state and/or stoichometry. This is Cyclin-dependent kinase inhibitor 1B (CDKN1B) from Felis catus (Cat).